The primary structure comprises 1522 residues: ATP-binding cassette sub-family C member 3 (1522 aa).

Topologically, residues 1–32 (MDRLCGSGELGSKFWDSNLTVYTNTPDLTPCF) are extracellular. Residue N18 is glycosylated (N-linked (GlcNAc...) asparagine). The helical transmembrane segment at 33–53 (QNSLLAWVPCIYLWAALPCYL) threads the bilayer. Topologically, residues 54–73 (FYLRHHRLGYIVLSCLSRLK) are cytoplasmic. The chain crosses the membrane as a helical span at residues 74–94 (TALGVLLWCISWVDLFYSFHG). Topologically, residues 95–99 (LVHGS) are extracellular. A helical transmembrane segment spans residues 100–120 (SPAPVFFITPLLVGITMLLAT). Over 121-132 (LLIQYERLRGVR) the chain is Cytoplasmic. A helical membrane pass occupies residues 133–153 (SSGVLIIFWLLCVICAIIPFR). Topologically, residues 154–171 (SKILLALAEGKILDPFRF) are extracellular. A helical transmembrane segment spans residues 172-192 (TTFYIYFALVLCAFILSCFQE). At 193-301 (KPPLFSPENL…KTKKPSFLRA (109 aa)) the chain is on the cytoplasmic side. A helical transmembrane segment spans residues 302-322 (LVRTFTSSLLMGACFKLIQDL). The region spanning 310-592 (LLMGACFKLI…LPQLISGMTQ (283 aa)) is the ABC transmembrane type-1 1 domain. Topologically, residues 323-347 (SPSSTHSCSASSSGLFRPHGPYWWG) are extracellular. Residues 348–368 (FLLAGLMFVSSTMQTLILHQH) form a helical membrane-spanning segment. The Cytoplasmic portion of the chain corresponds to 369–424 (YHCIFVMALRIRTAIIGVIYRKALTITNSVKREYTVGEMVNLMSVDAQRFMDVSPF). The chain crosses the membrane as a helical span at residues 425 to 445 (INLLWSAPLQVILAIYFLWQI). Topologically, residues 446-448 (LGP) are extracellular. Residues 449-469 (SALAGVAVIVLLIPLNGAVSM) traverse the membrane as a helical segment. Over 470–531 (KMKTYQVQQM…LLRKGAYLQA (62 aa)) the chain is Cytoplasmic. Residues 532 to 552 (ISTFIWVCTPFMVTLITLGVY) form a helical membrane-spanning segment. Residues 553-574 (VCVDKNNVLDAEKAFVSLSLFN) are Extracellular-facing. A helical transmembrane segment spans residues 575 to 595 (ILKIPLNLLPQLISGMTQTSV). Over 596 to 958 (SLKRIQDFLN…VKLSVYWDYA (363 aa)) the chain is Cytoplasmic. Positions 625-849 (ITIHNGTFSW…DGSFANFLRN (225 aa)) constitute an ABC transporter 1 domain. 659–666 (GPVGCGKS) is a binding site for ATP. Phosphoserine is present on residues S902 and S905. The chain crosses the membrane as a helical span at residues 959–979 (KSVGLCTTLFICLLYAGQNAV). The region spanning 966-1247 (TLFICLLYAG…MIRTLSDLES (282 aa)) is the ABC transmembrane type-1 2 domain. The Extracellular portion of the chain corresponds to 980 to 1016 (AIGANVWLSAWTNDVEEHGQQNNTSVRLGVYATLGIL). N-linked (GlcNAc...) asparagine glycans are attached at residues N1001 and N1002. A helical transmembrane segment spans residues 1017 to 1037 (QGLLVMLSAFTMVVGAIQAAR). At 1038–1080 (LLHTALLHNQIRAPQSFFDTTPSGRILNRFSKDIYVIHEVLAP) the chain is on the cytoplasmic side. A helical membrane pass occupies residues 1081–1101 (TILMLFNSFYTSISTIVVIVA). Residue S1102 is a topological domain, extracellular. A helical membrane pass occupies residues 1103–1123 (TPLFCVVVLPLAVFYGFVQRF). Residues 1124-1194 (YVATSRQLKR…ASNRWLGVHV (71 aa)) lie on the Cytoplasmic side of the membrane. A helical membrane pass occupies residues 1195 to 1215 (EFVGNCVVLFSALFAVIGRNS). The Extracellular portion of the chain corresponds to 1216–1217 (LN). The chain crosses the membrane as a helical span at residues 1218 to 1238 (PGLVGLSVSYALQVTLSLNWM). Residues 1239–1522 (IRTLSDLESN…YGMAKDAGLA (284 aa)) lie on the Cytoplasmic side of the membrane. In terms of domain architecture, ABC transporter 2 spans 1286-1518 (FRNYSVRYRP…GGIFYGMAKD (233 aa)). Position 1318–1325 (1318–1325 (GRTGAGKS)) interacts with ATP.

This sequence belongs to the ABC transporter superfamily. ABCC family. Conjugate transporter (TC 3.A.1.208) subfamily. Expressed in lung, ileum, colon and liver. Higher in liver of Eisai hyperbilirubinemic rats.

The protein localises to the basolateral cell membrane. It is found in the basal cell membrane. The catalysed reaction is an S-substituted glutathione(in) + ATP + H2O = an S-substituted glutathione(out) + ADP + phosphate + H(+). It carries out the reaction ATP + H2O + xenobioticSide 1 = ADP + phosphate + xenobioticSide 2.. The enzyme catalyses taurocholate(in) + ATP + H2O = taurocholate(out) + ADP + phosphate + H(+). It catalyses the reaction glycocholate(in) + ATP + H2O = glycocholate(out) + ADP + phosphate + H(+). The catalysed reaction is taurolithocholate 3-sulfate(in) + ATP + H2O = taurolithocholate 3-sulfate(out) + ADP + phosphate + H(+). It carries out the reaction 17beta-estradiol 17-O-(beta-D-glucuronate)(in) + ATP + H2O = 17beta-estradiol 17-O-(beta-D-glucuronate)(out) + ADP + phosphate + H(+). The enzyme catalyses dehydroepiandrosterone 3-sulfate(in) + ATP + H2O = dehydroepiandrosterone 3-sulfate(out) + ADP + phosphate + H(+). It catalyses the reaction leukotriene C4(in) + ATP + H2O = leukotriene C4(out) + ADP + phosphate + H(+). The catalysed reaction is (4Z,15Z)-bilirubin IXalpha C8-beta-D-glucuronoside(in) + ATP + H2O = (4Z,15Z)-bilirubin IXalpha C8-beta-D-glucuronoside(out) + ADP + phosphate + H(+). It carries out the reaction (4Z,15Z)-bilirubin IXalpha C8,C12-beta-D-bisglucuronoside(in) + ATP + H2O = (4Z,15Z)-bilirubin IXalpha C8,C12-beta-D-bisglucuronoside(out) + ADP + phosphate + H(+). The enzyme catalyses taurochenodeoxycholate 3-sulfate(in) + ATP + H2O = taurochenodeoxycholate 3-sulfate(out) + ADP + phosphate + H(+). In terms of biological role, ATP-dependent transporter of the ATP-binding cassette (ABC) family that binds and hydrolyzes ATP to enable active transport of various substrates including many drugs, toxicants and endogenous compound across cell membranes. Transports glucuronide conjugates such as bilirubin diglucuronide, estradiol-17-beta-o-glucuronide and GSH conjugates such as leukotriene C4 (LTC4). Transports also various bile salts (taurocholate, glycocholate, taurochenodeoxycholate-3-sulfate, taurolithocholate- 3-sulfate). Does not contribute substantially to bile salt physiology but provides an alternative route for the export of bile acids and glucuronides from cholestatic hepatocytes. May contribute to regulate the transport of organic compounds in testes across the blood-testis-barrier. The protein is ATP-binding cassette sub-family C member 3 (Abcc3) of Rattus norvegicus (Rat).